A 274-amino-acid chain; its full sequence is Orotidine 5'-phosphate decarboxylase (274 aa).

Lys-96 serves as the catalytic Proton donor.

This sequence belongs to the OMP decarboxylase family. Type 2 subfamily.

The catalysed reaction is orotidine 5'-phosphate + H(+) = UMP + CO2. It participates in pyrimidine metabolism; UMP biosynthesis via de novo pathway; UMP from orotate: step 2/2. The polypeptide is Orotidine 5'-phosphate decarboxylase (Bacteroides fragilis (strain YCH46)).